A 467-amino-acid polypeptide reads, in one-letter code: Methylenetetrahydrofolate--tRNA-(uracil-5-)-methyltransferase TrmFO (467 aa).

G11–G16 provides a ligand contact to FAD.

Belongs to the MnmG family. TrmFO subfamily. Requires FAD as cofactor.

It localises to the cytoplasm. The enzyme catalyses uridine(54) in tRNA + (6R)-5,10-methylene-5,6,7,8-tetrahydrofolate + NADH + H(+) = 5-methyluridine(54) in tRNA + (6S)-5,6,7,8-tetrahydrofolate + NAD(+). The catalysed reaction is uridine(54) in tRNA + (6R)-5,10-methylene-5,6,7,8-tetrahydrofolate + NADPH + H(+) = 5-methyluridine(54) in tRNA + (6S)-5,6,7,8-tetrahydrofolate + NADP(+). Functionally, catalyzes the folate-dependent formation of 5-methyl-uridine at position 54 (M-5-U54) in all tRNAs. The polypeptide is Methylenetetrahydrofolate--tRNA-(uracil-5-)-methyltransferase TrmFO (Prochlorococcus marinus (strain NATL1A)).